A 259-amino-acid polypeptide reads, in one-letter code: HTH-type transcriptional regulator Rv1931c (259 aa).

Over residues 104–121 (SHRRHRPRAGTGRRRPRH) the composition is skewed to basic residues. The disordered stretch occupies residues 104-170 (SHRRHRPRAG…GAGGHRGRAG (67 aa)). One can recognise an HTH araC/xylS-type domain in the interval 174-257 (RIGELAQRAA…GISPDQYRKA (84 aa)). 2 DNA-binding regions (H-T-H motif) span residues 176–197 (GELAQRAAMSPRHFTRVFSDEV) and 224–247 (VVAIAARCGFGTAETMRRSFIRRV).

In terms of biological role, controls the expression of genes important for virulence. In Mycobacterium tuberculosis (strain ATCC 25618 / H37Rv), this protein is HTH-type transcriptional regulator Rv1931c.